Consider the following 227-residue polypeptide: 2,3-bisphosphoglycerate-dependent phosphoglycerate mutase (227 aa).

Residues 7–14 (RHGFSEWN), 20–21 (TG), arginine 59, 86–89 (ERHY), lysine 97, 113–114 (RR), and 182–183 (GN) each bind substrate. Histidine 8 (tele-phosphohistidine intermediate) is an active-site residue. Glutamate 86 (proton donor/acceptor) is an active-site residue.

It belongs to the phosphoglycerate mutase family. BPG-dependent PGAM subfamily. Homodimer.

It catalyses the reaction (2R)-2-phosphoglycerate = (2R)-3-phosphoglycerate. Its pathway is carbohydrate degradation; glycolysis; pyruvate from D-glyceraldehyde 3-phosphate: step 3/5. Its function is as follows. Catalyzes the interconversion of 2-phosphoglycerate and 3-phosphoglycerate. The polypeptide is 2,3-bisphosphoglycerate-dependent phosphoglycerate mutase (Haemophilus influenzae (strain 86-028NP)).